We begin with the raw amino-acid sequence, 189 residues long: Adenylate kinase (189 aa).

11-16 provides a ligand contact to ATP; it reads GSGKGT. The segment at 31-60 is NMP; the sequence is STGDVLRAEIKKGTELGKTAKGYIDQGQLL. Residues Thr32, Arg37, 58 to 60, 86 to 89, and Gln93 contribute to the AMP site; these read QLL and GFPR. Residues 127-137 form an LID region; the sequence is KRGQESGRADD. ATP is bound at residue Arg128. AMP-binding residues include Arg134 and Arg145. Gly173 contacts ATP.

It belongs to the adenylate kinase family. As to quaternary structure, monomer.

It is found in the cytoplasm. The enzyme catalyses AMP + ATP = 2 ADP. It participates in purine metabolism; AMP biosynthesis via salvage pathway; AMP from ADP: step 1/1. Its function is as follows. Catalyzes the reversible transfer of the terminal phosphate group between ATP and AMP. Plays an important role in cellular energy homeostasis and in adenine nucleotide metabolism. The protein is Adenylate kinase of Phocaeicola vulgatus (strain ATCC 8482 / DSM 1447 / JCM 5826 / CCUG 4940 / NBRC 14291 / NCTC 11154) (Bacteroides vulgatus).